The sequence spans 205 residues: uncharacterized protein (205 aa).

An N-terminal signal peptide occupies residues 1–19 (MKTLCVLSIFLALLGGLCT). The span at 40–133 (VSSVASTSTP…PKTSKNNPKT (94 aa)) shows a compositional bias: low complexity. The disordered stretch occupies residues 40–135 (VSSVASTSTP…TSKNNPKTQE (96 aa)). Residues 147 to 167 (GILYLFILLLIIFVIILICFI) form a helical membrane-spanning segment.

The protein localises to the host membrane. This is an uncharacterized protein from Equine herpesvirus 2 (strain 86/87) (EHV-2).